The sequence spans 86 residues: YcgL domain-containing protein XCC3997 (86 aa).

Residues 1–83 enclose the YcgL domain; sequence MHAYVYKSQR…PKTVVLAGEC (83 aa).

The chain is YcgL domain-containing protein XCC3997 from Xanthomonas campestris pv. campestris (strain ATCC 33913 / DSM 3586 / NCPPB 528 / LMG 568 / P 25).